We begin with the raw amino-acid sequence, 142 residues long: Nucleoside diphosphate kinase (142 aa).

Lys9, Phe57, Arg85, Thr91, Arg102, and Asn112 together coordinate ATP. Catalysis depends on His115, which acts as the Pros-phosphohistidine intermediate.

The protein belongs to the NDK family. As to quaternary structure, homotetramer. Mg(2+) serves as cofactor.

It localises to the cytoplasm. The catalysed reaction is a 2'-deoxyribonucleoside 5'-diphosphate + ATP = a 2'-deoxyribonucleoside 5'-triphosphate + ADP. The enzyme catalyses a ribonucleoside 5'-diphosphate + ATP = a ribonucleoside 5'-triphosphate + ADP. Functionally, major role in the synthesis of nucleoside triphosphates other than ATP. The ATP gamma phosphate is transferred to the NDP beta phosphate via a ping-pong mechanism, using a phosphorylated active-site intermediate. The sequence is that of Nucleoside diphosphate kinase from Dehalococcoides mccartyi (strain ATCC BAA-2100 / JCM 16839 / KCTC 5957 / BAV1).